The primary structure comprises 476 residues: Serine protease HTRA4 (476 aa).

Residues 1–31 (MIRPQLRTAGLGRCLLPGLLLLLVPVLWAGA) form the signal peptide. The 74-residue stretch at 36–109 (TQPSCPAVCQ…PGFPSTCGCP (74 aa)) folds into the IGFBP N-terminal domain. Intrachain disulfides connect C40–C66, C44–C68, C49–C69, C55–C72, C80–C94, C88–C106, C108–C127, and C116–C152. One can recognise a Kazal-like domain in the interval 88-154 (CAPGLQCLQP…VPVQWGNCGD (67 aa)). The segment at 202–362 (GSGFIVSEDG…IPSDRVRQFL (161 aa)) is serine protease. Residues H218, D248, and S326 each act as charge relay system in the active site. The 92-residue stretch at 383–474 (LQMLSLTVPL…NLLLTVIPET (92 aa)) folds into the PDZ domain.

This sequence belongs to the peptidase S1C family.

The protein localises to the secreted. Functionally, serine protease. This chain is Serine protease HTRA4 (HTRA4), found in Homo sapiens (Human).